A 251-amino-acid polypeptide reads, in one-letter code: 2,3-bisphosphoglycerate-dependent phosphoglycerate mutase (251 aa).

Residues 7-14 (RHGESEWN), 20-21 (TG), Arg-59, 86-89 (ERHY), Lys-97, 113-114 (RR), and 186-187 (GN) contribute to the substrate site. His-8 serves as the catalytic Tele-phosphohistidine intermediate. The active-site Proton donor/acceptor is Glu-86.

Belongs to the phosphoglycerate mutase family. BPG-dependent PGAM subfamily.

The catalysed reaction is (2R)-2-phosphoglycerate = (2R)-3-phosphoglycerate. Its pathway is carbohydrate degradation; glycolysis; pyruvate from D-glyceraldehyde 3-phosphate: step 3/5. In terms of biological role, catalyzes the interconversion of 2-phosphoglycerate and 3-phosphoglycerate. This is 2,3-bisphosphoglycerate-dependent phosphoglycerate mutase from Treponema pallidum (strain Nichols).